A 556-amino-acid chain; its full sequence is Formate--tetrahydrofolate ligase (556 aa).

65–72 (TPAGEGKS) provides a ligand contact to ATP.

This sequence belongs to the formate--tetrahydrofolate ligase family.

The enzyme catalyses (6S)-5,6,7,8-tetrahydrofolate + formate + ATP = (6R)-10-formyltetrahydrofolate + ADP + phosphate. Its pathway is one-carbon metabolism; tetrahydrofolate interconversion. This is Formate--tetrahydrofolate ligase from Clostridium perfringens (strain ATCC 13124 / DSM 756 / JCM 1290 / NCIMB 6125 / NCTC 8237 / Type A).